A 101-amino-acid polypeptide reads, in one-letter code: Protein S100-A7 (101 aa).

S2 carries the N-acetylserine modification. 2 consecutive EF-hand domains span residues 13–48 (MIDM…SACD) and 50–85 (KGTN…IATD). 2 residues coordinate Zn(2+): H18 and D25. Cysteines 47 and 96 form a disulfide. The Ca(2+) site is built by D63, N65, D67, K69, and E74. Zn(2+) contacts are provided by H87 and H91.

Interacts with RANBP9. As to expression, fetal ear, skin, and tongue and human cell lines. Highly up-regulated in psoriatic epidermis. Also highly expressed in the urine of bladder squamous cell carcinoma (SCC) bearing patients.

The protein localises to the cytoplasm. Its subcellular location is the secreted. This chain is Protein S100-A7 (S100A7), found in Homo sapiens (Human).